Here is an 82-residue protein sequence, read N- to C-terminus: Penaeidin-3e (82 aa).

An N-terminal signal peptide occupies residues 1-19 (MRLVVCLVFLAPFALVCHG). At Gln20 the chain carries Pyrrolidone carboxylic acid. 3 disulfides stabilise this stretch: Cys51–Cys66, Cys55–Cys73, and Cys67–Cys74. The residue at position 81 (Ser81) is a Serine amide.

The protein belongs to the penaeidin family.

The protein resides in the cytoplasmic granule. Antibacterial and antifungal activity. Presents chitin-binding activity. This chain is Penaeidin-3e, found in Penaeus vannamei (Whiteleg shrimp).